Here is a 402-residue protein sequence, read N- to C-terminus: NADH-quinone oxidoreductase subunit D (402 aa).

The protein belongs to the complex I 49 kDa subunit family. In terms of assembly, NDH-1 is composed of 14 different subunits. Subunits NuoB, C, D, E, F, and G constitute the peripheral sector of the complex.

Its subcellular location is the cell inner membrane. It carries out the reaction a quinone + NADH + 5 H(+)(in) = a quinol + NAD(+) + 4 H(+)(out). Its function is as follows. NDH-1 shuttles electrons from NADH, via FMN and iron-sulfur (Fe-S) centers, to quinones in the respiratory chain. The immediate electron acceptor for the enzyme in this species is believed to be ubiquinone. Couples the redox reaction to proton translocation (for every two electrons transferred, four hydrogen ions are translocated across the cytoplasmic membrane), and thus conserves the redox energy in a proton gradient. This Azorhizobium caulinodans (strain ATCC 43989 / DSM 5975 / JCM 20966 / LMG 6465 / NBRC 14845 / NCIMB 13405 / ORS 571) protein is NADH-quinone oxidoreductase subunit D.